A 178-amino-acid polypeptide reads, in one-letter code: Large ribosomal subunit protein uL6 (178 aa).

It belongs to the universal ribosomal protein uL6 family. As to quaternary structure, part of the 50S ribosomal subunit.

This protein binds to the 23S rRNA, and is important in its secondary structure. It is located near the subunit interface in the base of the L7/L12 stalk, and near the tRNA binding site of the peptidyltransferase center. This chain is Large ribosomal subunit protein uL6, found in Streptococcus pneumoniae serotype 19F (strain G54).